We begin with the raw amino-acid sequence, 52 residues long: ATP synthase protein 8 (52 aa).

Residues 6–26 (PLLWLNLFLMFSATFVMFIVL) traverse the membrane as a helical segment.

It belongs to the ATPase protein 8 family. F-type ATPases have 2 components, CF(1) - the catalytic core - and CF(0) - the membrane proton channel.

Its subcellular location is the mitochondrion membrane. Functionally, mitochondrial membrane ATP synthase (F(1)F(0) ATP synthase or Complex V) produces ATP from ADP in the presence of a proton gradient across the membrane which is generated by electron transport complexes of the respiratory chain. F-type ATPases consist of two structural domains, F(1) - containing the extramembraneous catalytic core and F(0) - containing the membrane proton channel, linked together by a central stalk and a peripheral stalk. During catalysis, ATP synthesis in the catalytic domain of F(1) is coupled via a rotary mechanism of the central stalk subunits to proton translocation. Part of the complex F(0) domain. Minor subunit located with subunit a in the membrane. In Penaeus monodon (Giant tiger prawn), this protein is ATP synthase protein 8 (MT-ATP8).